The chain runs to 531 residues: Beta-hexosaminidase subunit beta (531 aa).

An N-terminal signal peptide occupies residues 1 to 24; the sequence is MRHRGLGLAALLALLAAVAPRSSA. Asn-50 is a glycosylation site (N-linked (GlcNAc...) asparagine). An intrachain disulfide couples Cys-65 to Cys-111. Residues Asn-116, Asn-164, and Asn-301 are each glycosylated (N-linked (GlcNAc...) asparagine). Intrachain disulfides connect Cys-283–Cys-334 and Cys-508–Cys-525. Glu-329 functions as the Proton donor in the catalytic mechanism.

Belongs to the glycosyl hydrolase 20 family. As to quaternary structure, there are 3 forms of beta-hexosaminidase: hexosaminidase A is a heterodimer composed of one subunit alpha and one subunit beta (chain A and B); hexosaminidase B is a homodimer of two beta subunits (two chains A and B); hexosaminidase S is a homodimer of two alpha subunits. The composition of the dimer (isozyme A versus isozyme S) has a significant effect on the substrate specificity of the alpha subunit active site.

It is found in the lysosome. Its subcellular location is the cytoplasmic vesicle. The protein localises to the secretory vesicle. The protein resides in the cortical granule. It catalyses the reaction Hydrolysis of terminal non-reducing N-acetyl-D-hexosamine residues in N-acetyl-beta-D-hexosaminides.. The enzyme catalyses N-acetyl-beta-D-galactosaminyl-(1-&gt;4)-beta-D-3-sulfogalactosyl-(1-&gt;4)-beta-D-glucosyl-(1&lt;-&gt;1')-ceramide + H2O = a beta-D-3-sulfogalactosyl-(1-&gt;4)-beta-D-glucosyl-(1&lt;-&gt;1')-ceramide + N-acetyl-beta-D-galactosamine. It carries out the reaction a ganglioside GM2 (d18:1(4E)) + H2O = a ganglioside GM3 (d18:1(4E)) + N-acetyl-beta-D-galactosamine. The catalysed reaction is a ganglioside GM2 + H2O = a ganglioside GM3 + N-acetyl-beta-D-galactosamine. It catalyses the reaction beta-D-GalNAc-(1-&gt;4)-alpha-L-IdoA-(1-&gt;3)-beta-D-GalNAc-4-sulfate-(1-&gt;4)-alpha-L-IdoA-(1-&gt;3)-D-GalNAc-4-sulfate + H2O = alpha-L-IdoA-(1-&gt;3)-beta-D-GalNAc-4-sulfate-(1-&gt;4)-alpha-L-IdoA-(1-&gt;3)-D-GalNAc-4-sulfate + N-acetyl-D-galactosamine. The enzyme catalyses N-acetyl-beta-D-6-sulfogalactosaminyl-(1-&gt;4)-alpha-L-iduronyl-(1-&gt;3)-N-acetyl-D-6-sulfogalactosamine + H2O = alpha-L-iduronyl-(1-&gt;3)-N-acetyl-D-6-sulfogalactosamine + N-acetyl-D-6-sulfogalactosamine. Its activity is regulated as follows. Addition of GM2A stimulates the hydrolysis of sulfated glycosphingolipid SM2 and the ganglioside GM2. Its function is as follows. Hydrolyzes the non-reducing end N-acetyl-D-hexosamine and/or sulfated N-acetyl-D-hexosamine of glycoconjugates, such as the oligosaccharide moieties from proteins and neutral glycolipids, or from certain mucopolysaccharides. The isozyme B does not hydrolyze each of these substrates, however hydrolyzes efficiently neutral oligosaccharide. Only the isozyme A is responsible for the degradation of GM2 gangliosides in the presence of GM2A. During fertilization is responsible, at least in part, for the zona block to polyspermy. Present in the cortical granules of non-activated oocytes, is exocytosed during the cortical reaction in response to oocyte activation and inactivates the sperm galactosyltransferase-binding site, accounting for the block in sperm binding to the zona pellucida. The sequence is that of Beta-hexosaminidase subunit beta from Felis catus (Cat).